Here is a 143-residue protein sequence, read N- to C-terminus: Regulator of ribonuclease activity B (143 aa).

A disordered region spans residues 113–143; that stretch reads EDPNAEEDEYGDDGEFFDDEDEADFNNAKVH. A compositionally biased stretch (acidic residues) spans 115 to 136; sequence PNAEEDEYGDDGEFFDDEDEAD.

Belongs to the RraB family. In terms of assembly, interacts with the C-terminal region of Rne.

The protein localises to the cytoplasm. Functionally, globally modulates RNA abundance by binding to RNase E (Rne) and regulating its endonucleolytic activity. Can modulate Rne action in a substrate-dependent manner by altering the composition of the degradosome. The polypeptide is Regulator of ribonuclease activity B (Haemophilus ducreyi (strain 35000HP / ATCC 700724)).